The primary structure comprises 315 residues: uncharacterized protein (315 aa).

Positions 296 to 308 (RSKLRKGTHKRTP) are enriched in basic residues. A disordered region spans residues 296 to 315 (RSKLRKGTHKRTPGRAGDAD).

This sequence belongs to the metallo-dependent hydrolases superfamily. Peptidase M19 family.

This is an uncharacterized protein from Acinetobacter calcoaceticus.